Reading from the N-terminus, the 287-residue chain is Uroporphyrinogen-III C-methyltransferase (287 aa).

Over residues 1 to 10 (MAGKTVTNGA) the composition is skewed to polar residues. Residues 1-24 (MAGKTVTNGAAQGKAARSGADGAV) form a disordered region. Residues P40, 116-118 (GGD), T146, and M199 each bind S-adenosyl-L-methionine.

The protein belongs to the precorrin methyltransferase family.

The enzyme catalyses uroporphyrinogen III + 2 S-adenosyl-L-methionine = precorrin-2 + 2 S-adenosyl-L-homocysteine + H(+). The protein operates within porphyrin-containing compound metabolism; siroheme biosynthesis; precorrin-2 from uroporphyrinogen III: step 1/1. Catalyzes the methylation of both C-2 and C-7 of uroporphyrinogen III leading to precorrin-1 and precorrin-2; their oxidative esterification gives respectively factor I octamethyl ester and sirohydrochlorin. Inactivation of uroporphyrinogen-III methyltransferase results in the loss of nitrite and nitric oxide reductase activities, but not of nitrous oxide reductase activity. Likely involved in heme D1 biosynthesis. The polypeptide is Uroporphyrinogen-III C-methyltransferase (nirE) (Paracoccus denitrificans (strain Pd 1222)).